A 486-amino-acid polypeptide reads, in one-letter code: Cytochrome P450 monooxygenase aclC (486 aa).

Residue cysteine 427 participates in heme binding.

This sequence belongs to the cytochrome P450 family. The cofactor is heme.

Its pathway is mycotoxin biosynthesis. Functionally, cytochrome P450 monooxygenase; part of the gene cluster that mediates the biosynthesis of aspirochlorine (or antibiotic A30641), an unusual halogenated spiro compound with distinctive antifungal properties due to selective inhibition of protein biosynthesis, and which is also active against bacteria, viruses, and murine tumor cells. The non-ribosomal peptide synthetase (NRPS) aclP is responsible the formation of the diketopiperazine (DKP) core from the condensation of 2 phenylalanine residues. One Phe residue is tailored into chlorotyrosine by hydroxylation and chlorination, whereas the second Phe undergoes an unprecedented C-C bond cleavage to be converted into glycine. After formation of the DKP, sulfur is incorporated into the DKP by conjugation with glutathione by aclG, followed by its stepwise degradation to the thiol by aclI, aclJ and aclK, and the dithiol oxidation by aclT. In addition, oxygenases (aclB, aclC, aclL and aclO) and O-methyltransferases (aclM and aclU) act as tailoring enzymes to produce the intermediate dechloroaspirochlorine. Ultimately, chlorination of dechloroaspirochlorine by the halogenase aclH is the last step in the aspirochlorine pathway. The sequence is that of Cytochrome P450 monooxygenase aclC from Aspergillus oryzae (strain ATCC 42149 / RIB 40) (Yellow koji mold).